Here is a 125-residue protein sequence, read N- to C-terminus: uncharacterized protein (125 aa).

This sequence to transposase of insertion sequence IS6501.

This is an uncharacterized protein from Sinorhizobium fredii (strain NBRC 101917 / NGR234).